Reading from the N-terminus, the 118-residue chain is Large ribosomal subunit protein bL20 (118 aa).

It belongs to the bacterial ribosomal protein bL20 family.

Functionally, binds directly to 23S ribosomal RNA and is necessary for the in vitro assembly process of the 50S ribosomal subunit. It is not involved in the protein synthesizing functions of that subunit. The sequence is that of Large ribosomal subunit protein bL20 from Nostoc punctiforme (strain ATCC 29133 / PCC 73102).